A 298-amino-acid chain; its full sequence is Phospholipase A1 (298 aa).

A disulfide bridge links C4 with C87. 2 N-linked (GlcNAc...) asparagine glycosylation sites follow: N88 and N122. S134 functions as the Nucleophile in the catalytic mechanism. D162 serves as the catalytic Charge relay system. Intrachain disulfides connect C173/C178 and C216/C225. The Charge relay system role is filled by H227. 3 cysteine pairs are disulfide-bonded: C242-C266, C243-C291, and C259-C264.

Belongs to the AB hydrolase superfamily. Lipase family. Expressed by the venom gland.

The protein resides in the secreted. It carries out the reaction a 1,2-diacyl-sn-glycero-3-phosphocholine + H2O = a 2-acyl-sn-glycero-3-phosphocholine + a fatty acid + H(+). Catalyzes the hydrolysis of phosphatidylcholine with phospholipase A1 activity. May act as an allergen and induce hemolytic activity. This Vespula squamosa (Southern yellow jacket) protein is Phospholipase A1.